A 221-amino-acid polypeptide reads, in one-letter code: Probable septum site-determining protein MinC (221 aa).

It belongs to the MinC family. In terms of assembly, interacts with MinD and FtsZ.

Cell division inhibitor that blocks the formation of polar Z ring septums. Rapidly oscillates between the poles of the cell to destabilize FtsZ filaments that have formed before they mature into polar Z rings. Prevents FtsZ polymerization. This chain is Probable septum site-determining protein MinC, found in Shewanella baltica (strain OS223).